The sequence spans 692 residues: Elongation factor G (692 aa).

Residues 8 to 282 form the tr-type G domain; sequence ENTRNIGIMA…AVIDYLPSPL (275 aa). GTP contacts are provided by residues 17-24, 81-85, and 135-138; these read AHIDAGKT, DTPGH, and NKMD.

Belongs to the TRAFAC class translation factor GTPase superfamily. Classic translation factor GTPase family. EF-G/EF-2 subfamily.

The protein resides in the cytoplasm. Its function is as follows. Catalyzes the GTP-dependent ribosomal translocation step during translation elongation. During this step, the ribosome changes from the pre-translocational (PRE) to the post-translocational (POST) state as the newly formed A-site-bound peptidyl-tRNA and P-site-bound deacylated tRNA move to the P and E sites, respectively. Catalyzes the coordinated movement of the two tRNA molecules, the mRNA and conformational changes in the ribosome. The polypeptide is Elongation factor G (Bacillus cereus (strain ATCC 14579 / DSM 31 / CCUG 7414 / JCM 2152 / NBRC 15305 / NCIMB 9373 / NCTC 2599 / NRRL B-3711)).